The following is a 469-amino-acid chain: Protein YfjI (469 aa).

The polypeptide is Protein YfjI (yfjI) (Escherichia coli (strain K12)).